The chain runs to 301 residues: Probable alpha-L-glutamate ligase (301 aa).

The region spanning 104-287 is the ATP-grasp domain; it reads LQLLARKGIG…VATKVIEFIE (184 aa). Residues lysine 141, 178-179, aspartate 187, and 211-213 contribute to the ATP site; these read EF and RSN. Mg(2+) contacts are provided by aspartate 248, glutamate 260, and asparagine 262. 3 residues coordinate Mn(2+): aspartate 248, glutamate 260, and asparagine 262.

The protein belongs to the RimK family. Mg(2+) serves as cofactor. It depends on Mn(2+) as a cofactor.

This chain is Probable alpha-L-glutamate ligase, found in Nitrosococcus oceani (strain ATCC 19707 / BCRC 17464 / JCM 30415 / NCIMB 11848 / C-107).